A 661-amino-acid chain; its full sequence is MDAASGAPLLTQPERLERRLKEIPAEPGCYLMRDCDDRILYVGKSKALRSRVRSYFRSRHDLSPRIRLMTRQVCEIEFIVTDSEAEALVLESNLIKNHQPHFNVLLKDDKKYPYLCITWSEAYPRIFITRRRRFRSPLDRFYGPYVDVGLLRRTLFLVKRVFPLRQRPRPMYPDRTCLNYSIGRCPGVCQEKISSVDYHRTLRKVAMVFQGRSDELQHLLQEQMERYAERMDYESAARVRDQLQGLDQLTADQKMSLPDSSVSRDVLALAFDERLAAVQLFQMRAGKLVGRLGYTADASGLEPGLILQRVIEEHYSQVDSVEVPPELLVQHALPQQKLMEDWLTEQRERRVQIHCPQRQQKADLIELVQRNAEFELLRAKQGQEKQSLATEDLAQLLELPTPPRRIEGYDISHIQGSDAVASQVVFIDGLPAKQHYRKYKIRSSSIRAGHSDDFMAMAEIMRRRFRRWARAKAEGMDVGALRHKGGSALQTDGLNDWPDVVMIDGGKGQLSAVMEALRELDLHEDLNVCSLAKQREEVFLPGESQPLESEPDQLGVVLLRRLRDEAHRFAVSFHRQQRGERMKRSRLSDIPGVGPKRVKDLLAHFHSIDAIQLASIETLSKAPGVGPALARDIHDFFHPSDEGTDADARAALEEQPQELSA.

Residues 25–104 (AEPGCYLMRD…IKNHQPHFNV (80 aa)) form the GIY-YIG domain. The UVR domain maps to 214–249 (DELQHLLQEQMERYAERMDYESAARVRDQLQGLDQL). Positions 636–652 (FFHPSDEGTDADARAAL) are enriched in basic and acidic residues. Residues 636–661 (FFHPSDEGTDADARAALEEQPQELSA) form a disordered region.

Belongs to the UvrC family. As to quaternary structure, interacts with UvrB in an incision complex.

It is found in the cytoplasm. The UvrABC repair system catalyzes the recognition and processing of DNA lesions. UvrC both incises the 5' and 3' sides of the lesion. The N-terminal half is responsible for the 3' incision and the C-terminal half is responsible for the 5' incision. In Synechococcus sp. (strain CC9605), this protein is UvrABC system protein C.